We begin with the raw amino-acid sequence, 412 residues long: Protein arginine N-methyltransferase 2 (412 aa).

Residues 190–412 (TAADPDTYLN…YYYHPKISFA (223 aa)) form the RMT2 domain. Residues Y197, M227, 250-255 (FGMGII), 271-273 (EAH), 298-299 (WQ), and D319 contribute to the S-adenosyl-L-methionine site.

This sequence belongs to the class I-like SAM-binding methyltransferase superfamily. RMT2 methyltransferase family. As to quaternary structure, monomer.

Its subcellular location is the cytoplasm. The protein localises to the nucleus. S-adenosyl-L-methionine-dependent protein-arginine N-methyltransferase that methylates the delta-nitrogen atom of arginine residues to form N5-methylarginine (type IV) in target proteins. Monomethylates ribosomal protein L12. This chain is Protein arginine N-methyltransferase 2, found in Candida glabrata (strain ATCC 2001 / BCRC 20586 / JCM 3761 / NBRC 0622 / NRRL Y-65 / CBS 138) (Yeast).